The primary structure comprises 275 residues: NH(3)-dependent NAD(+) synthetase (275 aa).

An ATP-binding site is contributed by 47-54; the sequence is GISGGQDS. Mg(2+) is bound at residue Asp53. Position 141 (Arg141) interacts with deamido-NAD(+). Thr161 lines the ATP pocket. Mg(2+) is bound at residue Glu166. The deamido-NAD(+) site is built by Lys174 and Asp181. The ATP site is built by Lys190 and Thr212. 261–262 contacts deamido-NAD(+); the sequence is HK.

The protein belongs to the NAD synthetase family. As to quaternary structure, homodimer.

It carries out the reaction deamido-NAD(+) + NH4(+) + ATP = AMP + diphosphate + NAD(+) + H(+). It participates in cofactor biosynthesis; NAD(+) biosynthesis; NAD(+) from deamido-NAD(+) (ammonia route): step 1/1. Functionally, catalyzes the ATP-dependent amidation of deamido-NAD to form NAD. Uses ammonia as a nitrogen source. The chain is NH(3)-dependent NAD(+) synthetase from Lactiplantibacillus plantarum (strain ATCC BAA-793 / NCIMB 8826 / WCFS1) (Lactobacillus plantarum).